A 410-amino-acid polypeptide reads, in one-letter code: Sulfate adenylyltransferase (410 aa).

It belongs to the sulfate adenylyltransferase family.

The enzyme catalyses sulfate + ATP + H(+) = adenosine 5'-phosphosulfate + diphosphate. Its pathway is sulfur metabolism; hydrogen sulfide biosynthesis; sulfite from sulfate: step 1/3. The protein is Sulfate adenylyltransferase of Syntrophobacter fumaroxidans (strain DSM 10017 / MPOB).